The following is a 173-amino-acid chain: Secreted RxLR effector protein RXLR-C12 (173 aa).

The N-terminal stretch at 1 to 18 is a signal peptide; the sequence is MLQFATAFLAISANVVMT. A RxLR-dEER motif is present at residues 41–55; that stretch reads RRLRTHEIGTVPEER. Asn155 carries N-linked (GlcNAc...) asparagine glycosylation.

Belongs to the RxLR effector family.

It is found in the secreted. It localises to the host cytoplasm. Its subcellular location is the host nucleus. Its function is as follows. Secreted effector that suppresses pattern-triggered immunity (PTI) in plant host. The sequence is that of Secreted RxLR effector protein RXLR-C12 from Plasmopara halstedii (Downy mildew of sunflower).